A 1240-amino-acid chain; its full sequence is MPAGGRAGSLKDPDVAELFFKDDPEKLFSDLREIGHGSFGAVYFARDVRNSEVVAIKKMSYSGKQSNEKWQDIIKEVRFLQKLRHPNTIQYRGCYLREHTAWLVMEYCLGSASDLLEVHKKPLQEVEIAAVTHGALQGLAYLHSHNMIHRDVKAGNILLSEPGLVKLGDFGSASIMAPANSFVGTPYWMAPEVILAMDEGQYDGKVDVWSLGITCIELAERKPPLFNMNAMSALYHIAQNESPALQSGHWSEYFRNFVDSCLQKIPQDRPTSEVLLKHRFVLRERPPTVIMDLIQRTKDAVRELDNLQYRKMKKILFQEAPNGPGAEAPEEEELTPCSQEAEPYTHRAGTLTSLESSHSVPSMSISASSQSSSVNSLADASDNEEEEEEEEEEEEEEEEEGPESREMAMMQEGEHTVTSHSSIIHRLPGSDNLYDDPYQPEMTPGPLQPPAAPPTSTSSSARRRAYCRNRDHFATIRTASLVSRQIQEHEQDSALREQLSGYKRMRRQHQKQLLALESRLRGEREEHSGRLQRELEAQRAGFGTEAEKLARRHQAIGEKEARAAQAEERKFQQHILGQQKKELAALLEAQKRTYKLRKEQLKEELQENPSTPKREKAEWLLRQKEQLQQCQAEEEAGLLRRQRQYFELQCRQYKRKMLLARHSLDQDLLREDLNKKQTQKDLECALLLRQHEATRELELRQLQAVQRTRAELTRLQHQTELGNQLEYNKRREQELRQKHAAQVRQQPKSLKVRAGQLPMGLPATGALGPLSTGTPSEEQPCSSGQEAILDQRMLGEEEEAVPERRILGKEGTTLEPEEQRILGEEMGTFSSSPQKHRSLANEEDWDISEEMKEIRVPSLASQERNIIGQEEAAAWSLWEKEGGNLVDVEFKLGWVQGPVLTPVPEEEEEEEEEGGAPIGTHRDPGDGCPSPDIPPEPPPSHLRQYPTSQLPGLLSHGLLAGLSFAVGSSSGLLPLLLLLLLPLLAAQGGGGLQAALLALEVGLVGLGASYLFLCTALHLPPGLFLLLAQGTALLAVLSLSWRRGLMGVPLGLGAAWLLAWPSLALPLAAMAAGGKWVRQQGPQMRRGISRLWLRILLRLSPMVFRALQGCGAVGDRGLFALYPKTNKNGFRSRLPVPWPRQGNPRTTQHPLAQLTRVWAVCKGWNWRLARASHRLASCLPPWAVHILASWGLLKGERPSRIPRLLPRSQRRLGLSASRQLPPGTVAGRRSQTRRTLPPWR.

Residue serine 9 is modified to Phosphoserine. The region spanning 28–281 (FSDLREIGHG…SEVLLKHRFV (254 aa)) is the Protein kinase domain. ATP contacts are provided by residues 34–42 (IGHGSFGAV) and lysine 57. Aspartate 151 acts as the Proton acceptor in catalysis. Position 181 is a phosphoserine (serine 181). A disordered region spans residues 320-463 (APNGPGAEAP…PTSTSSSARR (144 aa)). The segment covering 356–380 (SSHSVPSMSISASSQSSSVNSLADA) has biased composition (low complexity). Residues 381 to 401 (SDNEEEEEEEEEEEEEEEEEG) show a composition bias toward acidic residues. Over residues 402 to 417 (PESREMAMMQEGEHTV) the composition is skewed to basic and acidic residues. At serine 422 the chain carries Phosphoserine. Coiled coils occupy residues 493–528 (SALREQLSGYKRMRRQHQKQLLALESRLRGEREEHS) and 581–608 (KELAALLEAQKRTYKLRKEQLKEELQEN). At serine 663 the chain carries Phosphoserine. The stretch at 688–720 (LRQHEATRELELRQLQAVQRTRAELTRLQHQTE) forms a coiled coil. Phosphoserine is present on residues serine 782, serine 830, and serine 832. The stretch at 805–934 (RILGKEGTTL…GDGCPSPDIP (130 aa)) forms a coiled coil. A disordered region spans residues 899-946 (VLTPVPEEEEEEEEEGGAPIGTHRDPGDGCPSPDIPPEPPPSHLRQYP). The span at 904–914 (PEEEEEEEEEG) shows a compositional bias: acidic residues. The segment covering 931–940 (PDIPPEPPPS) has biased composition (pro residues). 5 helical membrane-spanning segments follow: residues 972–992 (LLPLLLLLLLPLLAAQGGGGL), 994–1014 (AALLALEVGLVGLGASYLFLC), 1019–1039 (LPPGLFLLLAQGTALLAVLSL), 1045–1065 (LMGVPLGLGAAWLLAWPSLAL), and 1175–1195 (LASCLPPWAVHILASWGLLKG). Leucine 999 bears the Omega-N-methylarginine mark. Leucine 1037 carries the phosphoserine modification. Residues 1212-1240 (LGLSASRQLPPGTVAGRRSQTRRTLPPWR) form a disordered region.

The protein belongs to the protein kinase superfamily. STE Ser/Thr protein kinase family. STE20 subfamily. As to quaternary structure, interacts with MAP2K3 and MAP2K6. Self-associates. Interacts with tubulins. Interacts with MAP3K7 and interferes with MAP3K7-binding to CHUK and thus prevents NF-kappa-B activation. Isoform 2 interacts with PCDH8; this complex may also include CDH2. Requires Mg(2+) as cofactor. In terms of processing, autophosphorylated. Phosphorylated by ATM. Phosphorylated on Ser-1037 by MAPK14. This phosphorylation is required PCDH8 for endocytosis.

The protein resides in the cytoplasmic vesicle membrane. Its subcellular location is the cytoplasm. It localises to the cytoskeleton. It is found in the cell projection. The protein localises to the dendrite. It carries out the reaction L-seryl-[protein] + ATP = O-phospho-L-seryl-[protein] + ADP + H(+). The enzyme catalyses L-threonyl-[protein] + ATP = O-phospho-L-threonyl-[protein] + ADP + H(+). Functionally, serine/threonine-protein kinase involved in different processes such as membrane blebbing and apoptotic bodies formation DNA damage response and MAPK14/p38 MAPK stress-activated MAPK cascade. Phosphorylates itself, MBP, activated MAPK8, MAP2K3, MAP2K6 and tubulins. Activates the MAPK14/p38 MAPK signaling pathway through the specific activation and phosphorylation of the upstream MAP2K3 and MAP2K6 kinases. In response to DNA damage, involved in the G2/M transition DNA damage checkpoint by activating the p38/MAPK14 stress-activated MAPK cascade, probably by mediating phosphorylation of upstream MAP2K3 and MAP2K6 kinases. May affect microtubule organization and stability. May play a role in the osmotic stress-MAPK8 pathway. Prevents MAP3K7-mediated activation of CHUK, and thus NF-kappa-B activation. Isoform 2, but not isoform 1, is required for PCDH8 endocytosis. Following homophilic interactions between PCDH8 extracellular domains, isoform 2 phosphorylates and activates MAPK14/p38 MAPK which in turn phosphorylates isoform 2. This process leads to PCDH8 endocytosis and CDH2 cointernalization. Both isoforms are involved in MAPK14/p38 MAPK activation. This chain is Serine/threonine-protein kinase TAO2 (Taok2), found in Mus musculus (Mouse).